The chain runs to 144 residues: Grifin (144 aa).

The Galectin domain maps to 5–133; sequence FEAFCAGGLA…DHQLAQVELA (129 aa). Serine 138 carries the post-translational modification Phosphoserine.

As to quaternary structure, homodimer. Lens-specific. Located at the interface between lens fiber cells (at protein level).

This is Grifin (Grifin) from Rattus norvegicus (Rat).